Consider the following 638-residue polypeptide: MNQPQIGTYNVGTQLTVGSHQVEIIKYLTSGGFAQVYSALINPPDPHSNSSVACLKRVIVPDKPSLNTLRAEVDAMRLLKNNRYVVSYIDSHAAKAMLHNGSYEVFVLMEYCERGGLIDFMNTRLQNRLHEFEILQIMSQVTQGVAAMHALQPPLIHRDIKIENVLISANNEYKLCDFGSVCGIIRPPRNSQELSYVQQDILKNTTAQYRSPEMIDTFRGLPIDEKSDIWALGIFLYKLCYYTTPFEKGGDLAILSGKFEFPLYPNYSEQLKGLIRDILVQDPRHRPNVYQLLKRISIMQNVPCPINDIQVVQAPSSHLNLTELHQLSATQNILSLNSPTTMENTMPNATFQISMADNTTTAQMHPNRKPSQIAYDASFSNSAKGSQPLFDKSQNMYHALDPPLVEPLASSVSNNDNELKANSATKLKQAIVSEAHTFRQNNSIDFPLQNIIPQYEDSSSSSDESYSGDVDELKKTRSLGSYSTRGNIKKNQSVKESLTSSSLPGTSFTPTSTKVNLKHENSPFKSTFVNTIDNSKDDLNKPSYEDLDVSKQNLKNSIQQRMIDKLNSSEESFNARKMSKVKLHEKGEIDKPTMLKSSGPISKDKKTKPTPPPKPSHLKPKPPPKPLLLAGRKLSLDK.

The Protein kinase domain occupies 22–298; sequence VEIIKYLTSG…VYQLLKRISI (277 aa). ATP-binding positions include 28–36 and K56; that span reads LTSGGFAQV. Catalysis depends on D159, which acts as the Proton acceptor. S478 carries the post-translational modification Phosphoserine. The span at 482-515 shows a compositional bias: polar residues; that stretch reads YSTRGNIKKNQSVKESLTSSSLPGTSFTPTSTKV. Residues 482-518 are disordered; the sequence is YSTRGNIKKNQSVKESLTSSSLPGTSFTPTSTKVNLK. Phosphoserine is present on residues S522 and S535. Residues 569 to 638 are disordered; that stretch reads SEESFNARKM…LAGRKLSLDK (70 aa). Residues 582–593 are compositionally biased toward basic and acidic residues; sequence KLHEKGEIDKPT. Residues 602–615 are interaction with SH3 domain of ABP1; it reads SKDKKTKPTPPPKP.

Belongs to the protein kinase superfamily. Ser/Thr protein kinase family. As to quaternary structure, interacts with ABP1, which is required for proper actin patch localization.

The protein localises to the cytoplasm. It localises to the cytoskeleton. Its subcellular location is the actin patch. The catalysed reaction is L-seryl-[protein] + ATP = O-phospho-L-seryl-[protein] + ADP + H(+). It catalyses the reaction L-threonyl-[protein] + ATP = O-phospho-L-threonyl-[protein] + ADP + H(+). Functionally, involved in regulation of actin cytoskeleton organization and endocytosis. The protein is Actin-regulating kinase 1 (ARK1) of Saccharomyces cerevisiae (strain ATCC 204508 / S288c) (Baker's yeast).